The chain runs to 601 residues: 66 kDa stress protein (601 aa).

WD repeat units lie at residues 56 to 95 (EHAQPATVAKYAPSGFYIASGDLSGTLRIWDTTQLEHPLK), 100 to 143 (VLSG…GEIT), 145 to 184 (HSKAIASCDFKATRPFRVITGAEDFQANWFEGPPFKFKHA), 187 to 226 (EHTRFLTCVRFSPDGEKVLTVGLDKKGFILDGKTGEKVGA), 233 to 272 (AHALGIYSCSWSPDSKKVLTVSADKSAKIWDDKGTLLTTF), 318 to 357 (GHNKLVTSLAFDTASKALYSGSYDGVILQWNLETGIAVPI), 435 to 478 (ASTT…LSEQ), 483 to 522 (GHRGFLTAIAYSPDGKHFASADQNRDIFVWDKASRKIKVE), 526 to 565 (YHNARVTSLAWNSNSNNIVTGSLDSHVYVWSVSEPSKHIA), and 569 to 600 (AHRGGVNAVLWVDEHTVASAGLDCSIKTWTIK).

It belongs to the WD repeat AIP1 family.

Functionally, associated with the process of cyst formation. In Physarum polycephalum (Slime mold), this protein is 66 kDa stress protein.